The sequence spans 716 residues: Splicing factor Cactin (716 aa).

The segment at 1–104 (MGSHGKGKRD…SKKAQKKALR (104 aa)) is disordered. Positions 10 to 22 (DRSGRQKKRRDES) are enriched in basic and acidic residues. Positions 25–45 (GSESESYTSDSDGSDDLSPPR) are enriched in low complexity. Over residues 46–61 (SSRRKKGSSSRRTRRR) the composition is skewed to basic residues. Basic and acidic residues predominate over residues 81 to 95 (SSKDYSEEKVTEYMS). Positions 153–201 (SVKAEKRRHRERMTEVEKVKKRREERAVEKARHEEEMALLARERARAEF) form a coiled coil. Position 450 is a phosphoserine (S450). A disordered region spans residues 466 to 525 (VEENEEEINDTNLSDAEEAFSPEPVAEEEEADEAAEAAGSFSPELMHGDDREEAIDPEED). Positions 468-500 (ENEEEINDTNLSDAEEAFSPEPVAEEEEADEAA) are enriched in acidic residues.

Belongs to the CACTIN family. Interacts with At5g63440.

Its subcellular location is the nucleus speckle. Functionally, plays a role in pre-mRNA splicing by facilitating excision of a subset of introns. Required for embryogenesis. The polypeptide is Splicing factor Cactin (CTN) (Arabidopsis thaliana (Mouse-ear cress)).